The following is a 158-amino-acid chain: UPF0303 protein SCO2848 (158 aa).

This sequence belongs to the UPF0303 family.

In Streptomyces coelicolor (strain ATCC BAA-471 / A3(2) / M145), this protein is UPF0303 protein SCO2848.